A 507-amino-acid chain; its full sequence is Ribose import ATP-binding protein RbsA (507 aa).

ABC transporter domains follow at residues 7 to 242 (LEMR…VGRP) and 253 to 497 (IPLG…TGVT). 39 to 46 (GENGAGKS) provides a ligand contact to ATP.

The protein belongs to the ABC transporter superfamily. Ribose importer (TC 3.A.1.2.1) family. In terms of assembly, the complex is composed of an ATP-binding protein (RbsA), two transmembrane proteins (RbsC) and a solute-binding protein (RbsB).

The protein localises to the cell inner membrane. It carries out the reaction D-ribose(out) + ATP + H2O = D-ribose(in) + ADP + phosphate + H(+). Part of the ABC transporter complex RbsABC involved in ribose import. Responsible for energy coupling to the transport system. In Yersinia pestis bv. Antiqua (strain Antiqua), this protein is Ribose import ATP-binding protein RbsA.